Reading from the N-terminus, the 528-residue chain is Dihydromonacolin L monooxygenase LovA (528 aa).

At M1–H23 the chain is on the cytoplasmic side. A helical; Signal-anchor for type II membrane protein membrane pass occupies residues G24–L44. Residues C45–L528 lie on the Lumenal side of the membrane. N-linked (GlcNAc...) asparagine glycosylation occurs at N399. C465 is a binding site for heme.

Belongs to the cytochrome P450 family. It depends on heme as a cofactor.

The protein resides in the membrane. It is found in the endoplasmic reticulum membrane. It carries out the reaction dihydromonacolin L carboxylate + reduced [NADPH--hemoprotein reductase] + O2 = monacolin L carboxylate + oxidized [NADPH--hemoprotein reductase] + 2 H2O + H(+). The catalysed reaction is monacolin L carboxylate + reduced [NADPH--hemoprotein reductase] + O2 = monacolin J carboxylate + oxidized [NADPH--hemoprotein reductase] + H2O + H(+). The protein operates within polyketide biosynthesis; lovastatin biosynthesis. Dihydromonacolin L monooxygenase; part of the gene cluster that mediates the biosynthesis of lovastatin (also known as mevinolin, mevacor or monacolin K), a hypolipidemic inhibitor of (3S)-hydroxymethylglutaryl-coenzyme A (HMG-CoA) reductase (HMGR). The first step in the biosynthesis of lovastatin is the production of dihydromonacolin L acid by the lovastatin nonaketide synthase lovB and the trans-acting enoyl reductase lovC via condensation of one acetyl-CoA unit and 8 malonyl-CoA units. Dihydromonacolin L acid is released from lovB by the thioesterase lovG. Next, dihydromonacolin L acid is oxidized by the dihydromonacolin L monooxygenase lovA twice to form monacolin J acid. The 2-methylbutyrate moiety of lovastatin is synthesized by the lovastatin diketide synthase lovF via condensation of one acetyl-CoA unit and one malonyl-CoA unit. Finally, the covalent attachment of this moiety to monacolin J acid is catalyzed by the transesterase lovD to yield lovastatin. LovD has broad substrate specificity and can also convert monacolin J to simvastatin using alpha-dimethylbutanoyl-S-methyl-3-mercaptopropionate (DMB-S-MMP) as the thioester acyl donor, and can also catalyze the reverse reaction and function as hydrolase in vitro. LovD has much higher activity with LovF-bound 2-methylbutanoate than with free diketide substrates. This is Dihydromonacolin L monooxygenase LovA from Aspergillus terreus (strain NIH 2624 / FGSC A1156).